Consider the following 484-residue polypeptide: Aspartyl/glutamyl-tRNA(Asn/Gln) amidotransferase subunit B (484 aa).

The protein belongs to the GatB/GatE family. GatB subfamily. As to quaternary structure, heterotrimer of A, B and C subunits.

The enzyme catalyses L-glutamyl-tRNA(Gln) + L-glutamine + ATP + H2O = L-glutaminyl-tRNA(Gln) + L-glutamate + ADP + phosphate + H(+). The catalysed reaction is L-aspartyl-tRNA(Asn) + L-glutamine + ATP + H2O = L-asparaginyl-tRNA(Asn) + L-glutamate + ADP + phosphate + 2 H(+). Functionally, allows the formation of correctly charged Asn-tRNA(Asn) or Gln-tRNA(Gln) through the transamidation of misacylated Asp-tRNA(Asn) or Glu-tRNA(Gln) in organisms which lack either or both of asparaginyl-tRNA or glutaminyl-tRNA synthetases. The reaction takes place in the presence of glutamine and ATP through an activated phospho-Asp-tRNA(Asn) or phospho-Glu-tRNA(Gln). This is Aspartyl/glutamyl-tRNA(Asn/Gln) amidotransferase subunit B from Bordetella parapertussis (strain 12822 / ATCC BAA-587 / NCTC 13253).